Reading from the N-terminus, the 428-residue chain is Putative zinc metalloprotease SA1105 (428 aa).

His-21 is a Zn(2+) binding site. Glu-22 is an active-site residue. Residue His-25 participates in Zn(2+) binding. 4 helical membrane-spanning segments follow: residues 172 to 194, 309 to 331, 352 to 374, and 401 to 420; these read FLTL…IGLA, GSTL…GFSF, IISL…LIPI, and TTII…LVTW. The PDZ domain maps to 186 to 269; the sequence is ALVLFIGLAY…TKSVELTPKK (84 aa).

This sequence belongs to the peptidase M50B family. Zn(2+) serves as cofactor.

It is found in the cell membrane. The chain is Putative zinc metalloprotease SA1105 from Staphylococcus aureus (strain N315).